The primary structure comprises 646 residues: Autophagy-related protein 28 (646 aa).

Disordered regions lie at residues 1–148 (MSSP…HVDN) and 221–245 (PTRS…RGLK). Residues 12-21 (SPRQRLSNPL) show a composition bias toward polar residues. A compositionally biased stretch (low complexity) spans 63-75 (SATSTRRSSSPAS). Polar residues predominate over residues 106–122 (MMMNQHPSRQSTVSSHG). Coiled coils occupy residues 283 to 350 (LDKM…MEDV) and 485 to 514 (QQAA…ESKH). Disordered stretches follow at residues 475-494 (SQAG…SQLS) and 546-612 (AAAV…RGSA). Basic and acidic residues-rich tracts occupy residues 557-575 (STDK…SHDE) and 588-597 (RMEDHDHDPP).

Belongs to the ATG28 family.

It localises to the cytoplasm. Its subcellular location is the vacuole membrane. It is found in the cytoplasmic vesicle membrane. Its function is as follows. Required for the autophagic degradation of peroxisomes called pexophagy, but not essential for general autophagy. Involved in resistance to elevated pH. The polypeptide is Autophagy-related protein 28 (Gibberella zeae (strain ATCC MYA-4620 / CBS 123657 / FGSC 9075 / NRRL 31084 / PH-1) (Wheat head blight fungus)).